Here is a 429-residue protein sequence, read N- to C-terminus: Methylenetetrahydrofolate--tRNA-(uracil-5-)-methyltransferase TrmFO (429 aa).

7–12 (GAGLAG) is an FAD binding site.

This sequence belongs to the MnmG family. TrmFO subfamily. Requires FAD as cofactor.

Its subcellular location is the cytoplasm. The catalysed reaction is uridine(54) in tRNA + (6R)-5,10-methylene-5,6,7,8-tetrahydrofolate + NADH + H(+) = 5-methyluridine(54) in tRNA + (6S)-5,6,7,8-tetrahydrofolate + NAD(+). It carries out the reaction uridine(54) in tRNA + (6R)-5,10-methylene-5,6,7,8-tetrahydrofolate + NADPH + H(+) = 5-methyluridine(54) in tRNA + (6S)-5,6,7,8-tetrahydrofolate + NADP(+). Its function is as follows. Catalyzes the folate-dependent formation of 5-methyl-uridine at position 54 (M-5-U54) in all tRNAs. The chain is Methylenetetrahydrofolate--tRNA-(uracil-5-)-methyltransferase TrmFO from Thermosipho africanus (strain TCF52B).